Reading from the N-terminus, the 284-residue chain is Halorhodopsin (284 aa).

Residues 1-30 (MIETAAADILAGGMVPLEMTQTQIFEAVQS) are Extracellular-facing. A helical transmembrane segment spans residues 31–56 (DTLLASSLWINIALAGLSILLFVYMG). Over 57–62 (RNVEDP) the chain is Cytoplasmic. Residues 63–86 (RAQLIFVATLMVPLVSISSYTGLV) form a helical membrane-spanning segment. Topologically, residues 87 to 110 (SGLTVSFLEMPAGHALAGQEVLTP) are extracellular. Residues 111 to 132 (WGRYLTWALSTPMILIAVGLLA) traverse the membrane as a helical segment. Over 133 to 135 (GSN) the chain is Cytoplasmic. A helical membrane pass occupies residues 136-159 (TTKLFTAVVADIGMCVTGLAAALT). Residues 160–162 (TSS) lie on the Extracellular side of the membrane. Residues 163–185 (YLLRWVWYAISCAFFVVVLYILL) form a helical membrane-spanning segment. Over 186–197 (AEWAEDAEIAGT) the chain is Cytoplasmic. A helical transmembrane segment spans residues 198 to 221 (ADIFNTLKVLTVVLWLGYPIFWAL). The Extracellular portion of the chain corresponds to 222-230 (GAEGLAVLD). The helical transmembrane segment at 231-259 (VAITSWAYSGMDIVAKYLFAFLLLRWVVN) threads the bilayer. N6-(retinylidene)lysine is present on K246. Topologically, residues 260–284 (NERTVADVASGLGSGSRGGAAPADD) are cytoplasmic.

It belongs to the archaeal/bacterial/fungal opsin family.

The protein resides in the cell membrane. Functionally, light-driven chloride pump. This Halobacterium sp. (strain SG1) protein is Halorhodopsin (hop).